The sequence spans 472 residues: MSSGTLYDKVWDLHRVADLPGGSTQLFVGLHLIHEVTSPQAFSGLRDKGLKVACPERTVATVDHIVPTTSQARPFADPLAEEMLSTLERNCAESGIVLNGIGSGRQGIVHVIAPELGLSQPGMTVACGDSHTSTHGAFGAIAFGIGTSQVRDVLASQSLAMNKLKVRRILVNGQLSAGVSAKDLVLHVIRTLGVKGGVGYAYEFAGSAIEALSMEERMTLCNMAIEGGARCGYVNPDQTTFDYLKGRPHAPSGAAWDAAVDWWLSLATDAAAEVDDEVVFDATVIAPTVTWGITPGQGLGIDECVPSLSMLDPGERPIAKEAYRYMDLDPGTPIAGVPIDVCFIGSCTNGRLSDLRAAAAVARGRQVAKGVKAFVVPGSEQVARAAEAEGLDQVFSEAGFEWREPGCSMCLAMNPDRLEGRQISASSSNRNFKGRQGSASGRTLLMSPAMVVAAAVHGRVTDVRTLALHSAS.

[4Fe-4S] cluster-binding residues include Cys-347, Cys-407, and Cys-410.

The protein belongs to the aconitase/IPM isomerase family. LeuC type 1 subfamily. In terms of assembly, heterodimer of LeuC and LeuD. It depends on [4Fe-4S] cluster as a cofactor.

The enzyme catalyses (2R,3S)-3-isopropylmalate = (2S)-2-isopropylmalate. It functions in the pathway amino-acid biosynthesis; L-leucine biosynthesis; L-leucine from 3-methyl-2-oxobutanoate: step 2/4. Its function is as follows. Catalyzes the isomerization between 2-isopropylmalate and 3-isopropylmalate, via the formation of 2-isopropylmaleate. This is 3-isopropylmalate dehydratase large subunit from Synechococcus sp. (strain CC9902).